The chain runs to 819 residues: FYN-binding protein 1 (819 aa).

Residues 1-45 (MAKFNTGSNPTEEAATSSRPFKVAGQSSPSGIQSRKNLFDNQGNA) are compositionally biased toward polar residues. Residues 1 to 490 (MAKFNTGSNP…REKKEQELKK (490 aa)) form a disordered region. Lys3 carries the N6-acetyllysine modification. Phosphoserine is present on residues Ser28 and Ser46. Residues 69–79 (TYEEKPEKEPK) show a composition bias toward basic and acidic residues. Pro residues predominate over residues 150-160 (GPKPGPAPPVP). A Phosphoserine modification is found at Ser222. Composition is skewed to basic and acidic residues over residues 237-248 (PPKEDPEDKDHG) and 273-285 (NFEEKKEDRKTDL). At Ser318 the chain carries Phosphoserine. Pro residues-rich tracts occupy residues 342–351 (GPPPPKPNRP) and 380–412 (LPPPPPTHPASQPPLPASHPAHPPVPSLPPRNI). Over residues 439–453 (LEEEQESEGETYEDI) the composition is skewed to acidic residues. At Ser445 the chain carries Phosphoserine. A coiled-coil region spans residues 448–495 (ETYEDIDSSKERDKKREKEEKKRLELERKEQKEREKKEQELKKKFKLT). Residues 454–489 (DSSKERDKKREKEEKKRLELERKEQKEREKKEQELK) show a composition bias toward basic and acidic residues. A Nuclear localization signal motif is present at residues 479–493 (KEREKKEQELKKKFK). One can recognise an SH3 1 domain in the interval 499 to 560 (QVIHHAKACC…KTTAVEIDYD (62 aa)). Residue Tyr559 is modified to Phosphotyrosine. Phosphoserine is present on residues Ser561 and Ser568. The SH2-binding; to LCP2 motif lies at 584-587 (YDDV). Disordered regions lie at residues 589 to 635 (EQDA…DEKT) and 649 to 728 (KDDR…EKEE). The span at 610–626 (TDDEIYDGIEEEDDDDG) shows a compositional bias: acidic residues. The SH2-binding; to FYN signature appears at 615–618 (YDGI). Residues 649–664 (KDDRKKSIREKPKVSE) show a composition bias toward basic and acidic residues. Residues 668-677 (NEGSSLPSQH) show a composition bias toward polar residues. Residues 682-692 (VGEEVYDDVDA) are compositionally biased toward acidic residues. Tyr687 carries the phosphotyrosine modification. Residues 710–736 (RAKTEEKDPKKLKKQEKEEKDLRKKFK) carry the Nuclear localization signal motif. A compositionally biased stretch (basic and acidic residues) spans 711 to 728 (AKTEEKDPKKLKKQEKEE). Residues 736–804 (KYDGEIRVLY…LRSYLVDNDG (69 aa)) form the SH3 2 domain.

Part of a complex consisting of SKAP2, FYB1 and PTPNS1. Part of a complex consisting of SKAP2, FYB1 and PIRB. Part of a complex consisting of SKAP1, FYB1 and CLNK. Interacts with CLNK (via its SH2 domain); this interaction allows SKAP1 and FYB1 to recruit FYN to the complex, thus promoting the phosphorylation of CLNK by FYN. Interacts with FYN. Interacts with LCP2. Interacts with SKAP1. Interacts with SKAP2. Interacts with FASLG. Interacts with EVL. Interacts with TMEM47. Interacts with LCK. Post-translationally, T-cell receptor ligation leads to increased tyrosine phosphorylation. As to expression, expressed in hematopoietic tissues such as myeloid and T-cells, spleen and thymus. Not expressed in B-cells, nor in non-lymphoid tissues. FYB-130 is preferentially expressed in mature T-cells compared to FYB-120, whereas thymocytes showed a greater relative amount of FYB-120. Expressed in podocytes.

It is found in the cytoplasm. The protein localises to the nucleus. The protein resides in the cell junction. Acts as an adapter protein of the FYN and LCP2 signaling cascades in T-cells. May play a role in linking T-cell signaling to remodeling of the actin cytoskeleton. Modulates the expression of IL2. Involved in platelet activation. Prevents the degradation of SKAP1 and SKAP2. May be involved in high affinity immunoglobulin epsilon receptor signaling in mast cells. In Mus musculus (Mouse), this protein is FYN-binding protein 1 (Fyb1).